The sequence spans 295 residues: Protease HtpX (295 aa).

Transmembrane regions (helical) follow at residues 4–24 (IFLF…VLRL) and 42–62 (ALLI…LAIS). Histidine 147 lines the Zn(2+) pocket. Residue glutamate 148 is part of the active site. Histidine 151 contributes to the Zn(2+) binding site. The next 2 membrane-spanning stretches (helical) occupy residues 155–175 (GDMV…IFLA) and 197–217 (FWIT…IIVM). Glutamate 224 serves as a coordination point for Zn(2+).

It belongs to the peptidase M48B family. Zn(2+) serves as cofactor.

The protein localises to the cell inner membrane. In Thioalkalivibrio sulfidiphilus (strain HL-EbGR7), this protein is Protease HtpX.